Reading from the N-terminus, the 362-residue chain is Protein-glutamate methylesterase/protein-glutamine glutaminase (362 aa).

One can recognise a Response regulatory domain in the interval Arg10 to Glu127. At Asp61 the chain carries 4-aspartylphosphate. Residues Arg173–Gly362 enclose the CheB-type methylesterase domain. Catalysis depends on residues Ser184, His211, and Asp304.

It belongs to the CheB family. Post-translationally, phosphorylated by CheA. Phosphorylation of the N-terminal regulatory domain activates the methylesterase activity.

The protein localises to the cytoplasm. It carries out the reaction [protein]-L-glutamate 5-O-methyl ester + H2O = L-glutamyl-[protein] + methanol + H(+). The catalysed reaction is L-glutaminyl-[protein] + H2O = L-glutamyl-[protein] + NH4(+). In terms of biological role, involved in chemotaxis. Part of a chemotaxis signal transduction system that modulates chemotaxis in response to various stimuli. Catalyzes the demethylation of specific methylglutamate residues introduced into the chemoreceptors (methyl-accepting chemotaxis proteins or MCP) by CheR. Also mediates the irreversible deamidation of specific glutamine residues to glutamic acid. This chain is Protein-glutamate methylesterase/protein-glutamine glutaminase, found in Symbiobacterium thermophilum (strain DSM 24528 / JCM 14929 / IAM 14863 / T).